Reading from the N-terminus, the 217-residue chain is 3,4-dihydroxy-2-butanone 4-phosphate synthase (217 aa).

Residues 37 to 38 (RE), D42, 150 to 154 (RGGHT), and E174 contribute to the D-ribulose 5-phosphate site. Position 38 (E38) interacts with Mg(2+). H153 is a binding site for Mg(2+).

It belongs to the DHBP synthase family. In terms of assembly, homodimer. The cofactor is Mg(2+). It depends on Mn(2+) as a cofactor.

The enzyme catalyses D-ribulose 5-phosphate = (2S)-2-hydroxy-3-oxobutyl phosphate + formate + H(+). It participates in cofactor biosynthesis; riboflavin biosynthesis; 2-hydroxy-3-oxobutyl phosphate from D-ribulose 5-phosphate: step 1/1. Catalyzes the conversion of D-ribulose 5-phosphate to formate and 3,4-dihydroxy-2-butanone 4-phosphate. In Enterobacter sp. (strain 638), this protein is 3,4-dihydroxy-2-butanone 4-phosphate synthase.